Consider the following 293-residue polypeptide: Probable porphobilinogen deaminase (293 aa).

Cys-233 carries the post-translational modification S-(dipyrrolylmethanemethyl)cysteine.

Belongs to the HMBS family. Requires dipyrromethane as cofactor.

It carries out the reaction 4 porphobilinogen + H2O = hydroxymethylbilane + 4 NH4(+). Its pathway is porphyrin-containing compound metabolism; protoporphyrin-IX biosynthesis; coproporphyrinogen-III from 5-aminolevulinate: step 2/4. Functionally, tetrapolymerization of the monopyrrole PBG into the hydroxymethylbilane pre-uroporphyrinogen in several discrete steps. In Saccharolobus islandicus (strain M.16.27) (Sulfolobus islandicus), this protein is Probable porphobilinogen deaminase.